Here is a 1295-residue protein sequence, read N- to C-terminus: Phosphoribosylformylglycinamidine synthase (1295 aa).

Residues 305–327 form a disordered region; that stretch reads WPGAATGSGGEIRDEGATGRGAK. Residues 307-318, 386-388, and Ala678 contribute to the ATP site; these read GAATGSGGEIRD and TGY. Mg(2+)-binding residues include Asp679, Glu718, Asn722, and Asp884. Ser886 is a binding site for ATP. Residues 1042–1295 enclose the Glutamine amidotransferase type-1 domain; that stretch reads VAVLREQGVN…IFRNARKQLG (254 aa). Catalysis depends on Cys1135, which acts as the Nucleophile. Catalysis depends on residues His1260 and Glu1262.

This sequence in the N-terminal section; belongs to the FGAMS family. In terms of assembly, monomer.

It is found in the cytoplasm. It carries out the reaction N(2)-formyl-N(1)-(5-phospho-beta-D-ribosyl)glycinamide + L-glutamine + ATP + H2O = 2-formamido-N(1)-(5-O-phospho-beta-D-ribosyl)acetamidine + L-glutamate + ADP + phosphate + H(+). The protein operates within purine metabolism; IMP biosynthesis via de novo pathway; 5-amino-1-(5-phospho-D-ribosyl)imidazole from N(2)-formyl-N(1)-(5-phospho-D-ribosyl)glycinamide: step 1/2. Its function is as follows. Phosphoribosylformylglycinamidine synthase involved in the purines biosynthetic pathway. Catalyzes the ATP-dependent conversion of formylglycinamide ribonucleotide (FGAR) and glutamine to yield formylglycinamidine ribonucleotide (FGAM) and glutamate. This Salmonella typhi protein is Phosphoribosylformylglycinamidine synthase.